A 503-amino-acid chain; its full sequence is Maturase K (503 aa).

This sequence belongs to the intron maturase 2 family. MatK subfamily.

The protein localises to the plastid. It localises to the chloroplast. Its function is as follows. Usually encoded in the trnK tRNA gene intron. Probably assists in splicing its own and other chloroplast group II introns. The polypeptide is Maturase K (Purshia tridentata (Antelope bitterbrush)).